A 117-amino-acid polypeptide reads, in one-letter code: Small ribosomal subunit protein bS6 (117 aa).

The protein belongs to the bacterial ribosomal protein bS6 family.

Binds together with bS18 to 16S ribosomal RNA. This Porphyromonas gingivalis (strain ATCC BAA-308 / W83) protein is Small ribosomal subunit protein bS6.